The chain runs to 270 residues: Nodule lectin (270 aa).

The first 33 residues, 1–33, serve as a signal peptide directing secretion; sequence MAFYRTNLPTRELFSLVSVVIVLLATNINSVQA. Residues 34 to 41 constitute a propeptide that is removed on maturation; that stretch reads LSFNFTKL. Asn134 is a glycosylation site (N-linked (GlcNAc...) asparagine).

The protein belongs to the leguminous lectin family. Post-translationally, glycosylated in a boron-dependent manner. Glycosylation is required for localization to symbiosomes. 3 different glycosylation variants, NLEC-1A, NLEC-1B and NLEC-1C, have been identified. As to expression, expressed in nodules of Rhizobium-infected and uninfected roots and in the root stele near the nodule attachment point. In roots which have been colonized by the endomycorrhizal fungus G.versiforme, detected only in cortical cells colonized by the fungus, mainly those containing arbuscules.

It is found in the symbiosome. It localises to the peribacteroid space. The protein resides in the peribacteroid membrane. Its function is as follows. Involved in symbiosome development. This Pisum sativum (Garden pea) protein is Nodule lectin (NLEC1).